Reading from the N-terminus, the 366-residue chain is tRNA/tmRNA (uracil-C(5))-methyltransferase (366 aa).

S-adenosyl-L-methionine is bound by residues glutamine 190, tyrosine 218, asparagine 223, glutamate 239, and aspartate 299. Cysteine 324 functions as the Nucleophile in the catalytic mechanism. The active-site Proton acceptor is glutamate 358.

It belongs to the class I-like SAM-binding methyltransferase superfamily. RNA M5U methyltransferase family. TrmA subfamily.

The catalysed reaction is uridine(54) in tRNA + S-adenosyl-L-methionine = 5-methyluridine(54) in tRNA + S-adenosyl-L-homocysteine + H(+). It carries out the reaction uridine(341) in tmRNA + S-adenosyl-L-methionine = 5-methyluridine(341) in tmRNA + S-adenosyl-L-homocysteine + H(+). Functionally, dual-specificity methyltransferase that catalyzes the formation of 5-methyluridine at position 54 (m5U54) in all tRNAs, and that of position 341 (m5U341) in tmRNA (transfer-mRNA). In Cellvibrio japonicus (strain Ueda107) (Pseudomonas fluorescens subsp. cellulosa), this protein is tRNA/tmRNA (uracil-C(5))-methyltransferase.